Reading from the N-terminus, the 207-residue chain is Succinyl-CoA:3-ketoacid coenzyme A transferase subunit B (207 aa).

The active site involves E43.

Belongs to the 3-oxoacid CoA-transferase subunit B family. As to quaternary structure, heterodimer of a subunit A and a subunit B.

It catalyses the reaction a 3-oxo acid + succinyl-CoA = a 3-oxoacyl-CoA + succinate. The protein is Succinyl-CoA:3-ketoacid coenzyme A transferase subunit B (scoB) of Helicobacter pylori (strain J99 / ATCC 700824) (Campylobacter pylori J99).